Reading from the N-terminus, the 356-residue chain is Cyclin-A1-4 (356 aa).

It belongs to the cyclin family. Cyclin AB subfamily.

This chain is Cyclin-A1-4 (CYCA1-4), found in Oryza sativa subsp. japonica (Rice).